A 271-amino-acid polypeptide reads, in one-letter code: Energy-coupling factor transporter ATP-binding protein EcfA (271 aa).

One can recognise an ABC transporter domain in the interval 2–231 (ISIQNLTFYY…PLFLQQYKLT (230 aa)). Residue 34–41 (GHNGSGKS) participates in ATP binding.

It belongs to the ABC transporter superfamily. Energy-coupling factor EcfA family. As to quaternary structure, forms a stable energy-coupling factor (ECF) transporter complex composed of 2 membrane-embedded substrate-binding proteins (S component), 2 ATP-binding proteins (A component) and 2 transmembrane proteins (T component).

It localises to the cell membrane. ATP-binding (A) component of a common energy-coupling factor (ECF) ABC-transporter complex. Unlike classic ABC transporters this ECF transporter provides the energy necessary to transport a number of different substrates. This chain is Energy-coupling factor transporter ATP-binding protein EcfA, found in Aster yellows witches'-broom phytoplasma (strain AYWB).